The chain runs to 316 residues: Protoheme IX farnesyltransferase (316 aa).

The next 9 helical transmembrane spans lie at 29 to 49, 54 to 74, 102 to 122, 123 to 143, 151 to 171, 179 to 199, 224 to 241, 245 to 267, and 283 to 303; these read IIPLLLITTAASMWIASEGRV, LLITLLGGTLAAASAQTLNCI, LIFALALGVLSFALLATFVNV, LSGCLALSGIVFYMLVYTHWL, IVIGGAAGSIPPLVGWAAVTG, VLFALIFLWTPPHFWALALMI, IWYYSLLVVPFSLLLVYP, LGILYLAIAIILGGQFLVKAWQL, and FSIFYLMLLCLAMVIDSLPVT.

The protein belongs to the UbiA prenyltransferase family. Protoheme IX farnesyltransferase subfamily.

It localises to the cell inner membrane. It carries out the reaction heme b + (2E,6E)-farnesyl diphosphate + H2O = Fe(II)-heme o + diphosphate. Its pathway is porphyrin-containing compound metabolism; heme O biosynthesis; heme O from protoheme: step 1/1. Converts heme B (protoheme IX) to heme O by substitution of the vinyl group on carbon 2 of heme B porphyrin ring with a hydroxyethyl farnesyl side group. In Synechocystis sp. (strain ATCC 27184 / PCC 6803 / Kazusa), this protein is Protoheme IX farnesyltransferase.